A 286-amino-acid polypeptide reads, in one-letter code: Putative sugar uptake protein lin0215 (286 aa).

A run of 8 helical transmembrane segments spans residues 4–26 (MIALIPALLWGTVPLIITKFGGS), 33–55 (GMTLGALTFAVIVFFFTDPVYTL), 114–136 (LRIILGFIALALIVGGIFLTSYA), 149–167 (GLITLVISSLGYVGLVVLI), 177–194 (AILPQAIGMVLSALIMTH), 207–226 (LLLIIPGMIWAAGNVAMVHA), 230–252 (VGVATGFSLSQLGVVISTIGGIV), and 264–283 (LYVIVGVVLVVLGGILIGVA).

This sequence belongs to the GRP transporter (TC 2.A.7.5) family.

Its subcellular location is the cell membrane. The polypeptide is Putative sugar uptake protein lin0215 (Listeria innocua serovar 6a (strain ATCC BAA-680 / CLIP 11262)).